Reading from the N-terminus, the 356-residue chain is 3-isopropylmalate dehydrogenase (356 aa).

4 residues coordinate substrate: R91, R101, R129, and D223. Positions 223, 247, and 251 each coordinate Mg(2+). 281–293 (GSAPDIAGKGIAN) lines the NAD(+) pocket.

This sequence belongs to the isocitrate and isopropylmalate dehydrogenases family. LeuB type 1 subfamily. As to quaternary structure, homodimer. Requires Mg(2+) as cofactor. Mn(2+) is required as a cofactor.

It is found in the cytoplasm. It carries out the reaction (2R,3S)-3-isopropylmalate + NAD(+) = 4-methyl-2-oxopentanoate + CO2 + NADH. It functions in the pathway amino-acid biosynthesis; L-leucine biosynthesis; L-leucine from 3-methyl-2-oxobutanoate: step 3/4. Functionally, catalyzes the oxidation of 3-carboxy-2-hydroxy-4-methylpentanoate (3-isopropylmalate) to 3-carboxy-4-methyl-2-oxopentanoate. The product decarboxylates to 4-methyl-2 oxopentanoate. In Ralstonia nicotianae (strain ATCC BAA-1114 / GMI1000) (Ralstonia solanacearum), this protein is 3-isopropylmalate dehydrogenase.